Here is a 105-residue protein sequence, read N- to C-terminus: Insulin (105 aa).

The N-terminal stretch at Met1–Ala24 is a signal peptide. Intrachain disulfides connect Cys31–Cys91, Cys43–Cys104, and Cys90–Cys95. The propeptide at Glu57–Gln82 is c peptide.

This sequence belongs to the insulin family. As to quaternary structure, heterodimer of a B chain and an A chain linked by two disulfide bonds.

It localises to the secreted. Its function is as follows. Insulin decreases blood glucose concentration. It increases cell permeability to monosaccharides, amino acids and fatty acids. It accelerates glycolysis, the pentose phosphate cycle, and glycogen synthesis in liver. The protein is Insulin (INS) of Ovis aries (Sheep).